The following is a 136-amino-acid chain: Large ribosomal subunit protein eL27 (136 aa).

Residues 5-40 enclose the KOW domain; that stretch reads MKPGKVVMVLAGRYAGRKAVIVKNIDDGTADRPYSH.

Belongs to the eukaryotic ribosomal protein eL27 family. As to quaternary structure, component of the large ribosomal subunit.

It localises to the cytoplasm. Its subcellular location is the cytosol. The protein localises to the rough endoplasmic reticulum. Component of the large ribosomal subunit. The sequence is that of Large ribosomal subunit protein eL27 (rpl27) from Ictalurus punctatus (Channel catfish).